The chain runs to 216 residues: Homologous-pairing protein 2 (216 aa).

The protein belongs to the HOP2 family. Interacts with mcp7.

It localises to the nucleus. In terms of biological role, required for proper homologous pairing and efficient cross-over and intragenic recombination during meiosis. Acts indirectly in a process facilitating homologous recombination. Acts during mid- to late-horse-tail period. The polypeptide is Homologous-pairing protein 2 (meu13) (Schizosaccharomyces pombe (strain 972 / ATCC 24843) (Fission yeast)).